The sequence spans 358 residues: Photosystem II protein D1 2 (358 aa).

3 helical membrane passes run 28–45 (YVGW…AATI), 117–132 (HFLI…QWEL), and 141–155 (WICV…AAMA). Residue His117 participates in chlorophyll a binding. Pheophytin a is bound at residue Tyr125. [CaMn4O5] cluster is bound by residues Asp169 and Glu188. A helical membrane pass occupies residues 196-217 (FHMLGVAGVFGGSLFSAMHGSL). His197 serves as a coordination point for chlorophyll a. A quinone-binding positions include His214 and 263–264 (SF). Residue His214 participates in Fe cation binding. His271 contributes to the Fe cation binding site. The chain crosses the membrane as a helical span at residues 273–287 (FLGAWPVVGIWFTSM). [CaMn4O5] cluster-binding residues include His331, Glu332, Asp341, and Ala343. Positions 344 to 358 (TVESTPVALQAPAIG) are excised as a propeptide.

This sequence belongs to the reaction center PufL/M/PsbA/D family. In terms of assembly, PSII is composed of 1 copy each of membrane proteins PsbA, PsbB, PsbC, PsbD, PsbE, PsbF, PsbH, PsbI, PsbJ, PsbK, PsbL, PsbM, PsbT, PsbX, PsbY, PsbZ, Psb30/Ycf12, peripheral proteins PsbO, CyanoQ (PsbQ), PsbU, PsbV and a large number of cofactors. It forms dimeric complexes. The D1/D2 heterodimer binds P680, chlorophylls that are the primary electron donor of PSII, and subsequent electron acceptors. It shares a non-heme iron and each subunit binds pheophytin, quinone, additional chlorophylls, carotenoids and lipids. D1 provides most of the ligands for the Mn4-Ca-O5 cluster of the oxygen-evolving complex (OEC). There is also a Cl(-1) ion associated with D1 and D2, which is required for oxygen evolution. The PSII complex binds additional chlorophylls, carotenoids and specific lipids. serves as cofactor. Tyr-160 forms a radical intermediate that is referred to as redox-active TyrZ, YZ or Y-Z. In terms of processing, C-terminally processed by CtpA; processing is essential to allow assembly of the oxygen-evolving complex and thus photosynthetic growth.

It localises to the cellular thylakoid membrane. It carries out the reaction 2 a plastoquinone + 4 hnu + 2 H2O = 2 a plastoquinol + O2. In terms of biological role, photosystem II (PSII) is a light-driven water:plastoquinone oxidoreductase that uses light energy to abstract electrons from H(2)O, generating O(2) and a proton gradient subsequently used for ATP formation. It consists of a core antenna complex that captures photons, and an electron transfer chain that converts photonic excitation into a charge separation. The D1/D2 (PsbA/PsbD) reaction center heterodimer binds P680, the primary electron donor of PSII as well as several subsequent electron acceptors. This is Photosystem II protein D1 2 from Parasynechococcus marenigrum (strain WH8102).